The following is a 350-amino-acid chain: Protein-glutamate methylesterase/protein-glutamine glutaminase (350 aa).

In terms of domain architecture, Response regulatory spans 5–122 (KVLCVDDSAL…RDGLIEYSEV (118 aa)). Aspartate 56 carries the post-translational modification 4-aspartylphosphate. Residues 152 to 346 (PFASSEKLVI…ERILTRLGDR (195 aa)) enclose the CheB-type methylesterase domain. Catalysis depends on residues serine 165, histidine 191, and aspartate 288.

Belongs to the CheB family. In terms of processing, phosphorylated by CheA. Phosphorylation of the N-terminal regulatory domain activates the methylesterase activity.

Its subcellular location is the cytoplasm. The enzyme catalyses [protein]-L-glutamate 5-O-methyl ester + H2O = L-glutamyl-[protein] + methanol + H(+). It catalyses the reaction L-glutaminyl-[protein] + H2O = L-glutamyl-[protein] + NH4(+). Functionally, involved in chemotaxis. Part of a chemotaxis signal transduction system that modulates chemotaxis in response to various stimuli. Catalyzes the demethylation of specific methylglutamate residues introduced into the chemoreceptors (methyl-accepting chemotaxis proteins or MCP) by CheR. Also mediates the irreversible deamidation of specific glutamine residues to glutamic acid. This is Protein-glutamate methylesterase/protein-glutamine glutaminase from Bordetella parapertussis (strain 12822 / ATCC BAA-587 / NCTC 13253).